Reading from the N-terminus, the 482-residue chain is Proline--tRNA ligase (482 aa).

It belongs to the class-II aminoacyl-tRNA synthetase family. ProS type 3 subfamily. As to quaternary structure, homodimer.

It localises to the cytoplasm. It carries out the reaction tRNA(Pro) + L-proline + ATP = L-prolyl-tRNA(Pro) + AMP + diphosphate. Its function is as follows. Catalyzes the attachment of proline to tRNA(Pro) in a two-step reaction: proline is first activated by ATP to form Pro-AMP and then transferred to the acceptor end of tRNA(Pro). The polypeptide is Proline--tRNA ligase (Thermofilum pendens (strain DSM 2475 / Hrk 5)).